The primary structure comprises 902 residues: Glycogen phosphorylase (902 aa).

The tract at residues 1 to 21 (MPPASTSTTNDMITEEPTSPH) is disordered. Thr-31 carries the post-translational modification Phosphothreonine. A Phosphoserine modification is found at Ser-333. Position 751 is an N6-(pyridoxal phosphate)lysine (Lys-751).

It belongs to the glycogen phosphorylase family. In terms of assembly, homodimer. It depends on pyridoxal 5'-phosphate as a cofactor.

The protein resides in the cytoplasm. Its subcellular location is the cytosol. It carries out the reaction [(1-&gt;4)-alpha-D-glucosyl](n) + phosphate = [(1-&gt;4)-alpha-D-glucosyl](n-1) + alpha-D-glucose 1-phosphate. With respect to regulation, activated by phosphorylation of Thr-31. Phosphorylase is an important allosteric enzyme in carbohydrate metabolism. Enzymes from different sources differ in their regulatory mechanisms and in their natural substrates. However, all known phosphorylases share catalytic and structural properties. This is Glycogen phosphorylase (GPH1) from Saccharomyces cerevisiae (strain ATCC 204508 / S288c) (Baker's yeast).